The following is a 250-amino-acid chain: MPAPVLSGPQYLREGLKLVLSPGLRLFVLLPLAINLVLFVGLIYLAGHQFSLWVDTLMPSLPEWLSFLSYILWPLFVVLVALMVFFTFTMLANVIAAPFNGFLAEKVEVVVRGTDDFPAFSWGELIAMIPRTLAREMRKLGYFLPRAIGLFILSFIPVVNIVAAPLWLLFGVWMMAIQYIDYPADNHKLGWNEMLAWLRQKRWQSMSFGGIVYLVLLIPVVNILMMPAAVAGATLFWVRERGAENLVTQR.

4 consecutive transmembrane segments (helical) span residues 26–46 (LFVLLPLAINLVLFVGLIYLA), 71–91 (ILWPLFVVLVALMVFFTFTML), 150–170 (LFILSFIPVVNIVAAPLWLLF), and 211–231 (IVYLVLLIPVVNILMMPAAVA).

The protein belongs to the CysZ family.

It is found in the cell inner membrane. In terms of biological role, high affinity, high specificity proton-dependent sulfate transporter, which mediates sulfate uptake. Provides the sulfur source for the cysteine synthesis pathway. This is Sulfate transporter CysZ from Pseudomonas fluorescens (strain Pf0-1).